The following is a 603-amino-acid chain: MKENLTNLFEKVIKLPTTSGCYKMLNENKKILYIGKAKNLRSRVKSYFLEKNSHKIKILMKNVKSIEVITTNSEYEALLLECNLIKTHKPDYNVKLKDGKGYPMVRITHEKYPRIFKTRKIINDKSEYFGPFTNVKKLDQVLDFINKTFKIRKCKKKSNAPCLYYHMGQCLGVCYKENLEKEYQKELDKAKSILNGNISEISSQIDIKLKHAIQKEDFETAIKLKEIRNSLIEINQIQIVTKTNNLNIDYVHVHPGENVNTIIVLKYRNGKLVERDANFDESICKENELILQFLIQYYTSINMIVPDKIHIFLKDIDTKNVEKLINEIKNTKTEIIYKETEEILKIMEMAISNAELSLREYENKSTKALESLKIVLEMDKLPKIIEGFDIAHLKGQETVASMVTFKMGMPFKENYRLYKLNSLLKGEIDDFKAIKEVISRRYSEIINNNLELPNLILIDGGKGQLNAALSILKGLKIENKVKVCSLAKKQETIFLTTNKKGINLPQGHPALRILQNVRDEAHRKANGFNKKRREKITLLYTKIHGIGEKTAQKILKSIGTYKDILPLSENEISEKIKVNVQLAKRIKEFAIKENSIKNNNQDK.

The region spanning 17–94 (TTSGCYKMLN…IKTHKPDYNV (78 aa)) is the GIY-YIG domain.

Belongs to the UvrC family. Interacts with UvrB in an incision complex.

It localises to the cytoplasm. The UvrABC repair system catalyzes the recognition and processing of DNA lesions. UvrC both incises the 5' and 3' sides of the lesion. The N-terminal half is responsible for the 3' incision and the C-terminal half is responsible for the 5' incision. The polypeptide is UvrABC system protein C (Borreliella burgdorferi (strain ATCC 35210 / DSM 4680 / CIP 102532 / B31) (Borrelia burgdorferi)).